The primary structure comprises 572 residues: Excitatory amino acid transporter 2 (572 aa).

Polar residues predominate over residues 1–11 (MASTEGANNMP). Residues 1–28 (MASTEGANNMPKQVEVRMHDSHLSSDEP) form a disordered region. Residues 1–44 (MASTEGANNMPKQVEVRMHDSHLSSDEPKHRNLGMRMCDKLGKN) lie on the Cytoplasmic side of the membrane. 4 positions are modified to phosphoserine: S3, S21, S24, and S25. The span at 14-28 (VEVRMHDSHLSSDEP) shows a compositional bias: basic and acidic residues. A lipid anchor (S-palmitoyl cysteine) is attached at C38. Helical transmembrane passes span 45 to 64 (LLLSLTVFGVILGAVCGGLL), 88 to 108 (MLKMLILPLIISSLITGLSGL), and 121 to 142 (MVYYMSTTIIAAVLGVILVLAI). Residues N205 and N215 are each glycosylated (N-linked (GlcNAc...) asparagine). 3 helical membrane-spanning segments follow: residues 235–258 (FKDGMNVLGLIGFFIAFGIAMGKM), 268–295 (FFNILNEIVMKLVIMIMWYSPLGIACLI), and 317–338 (ITVIVGLIIHGGIFLPLIYFVV). Residues 344 to 374 (FSFFAGIFQAWITALGTASSAGTLPVTFRCL) constitute an intramembrane region (discontinuously helical). 361–363 (ASS) provides a ligand contact to L-aspartate. Residues 384-410 (VTRFVLPVGATINMDGTALYEAVAAIF) traverse the membrane as a helical segment. The Na(+) site is built by G392, T394, and N396. Residues T400, 441–445 (IPSAG), D474, and N481 each bind L-aspartate. The discontinuously helical intramembrane region spans 424 to 457 (IVTVSLTATLASIGAASIPSAGLVTMLLILTAVG). Residues 471–492 (WLLDRMRTSVNVVGDSFGAGIV) traverse the membrane as a helical segment. Na(+) contacts are provided by N481 and D485. 4 positions are modified to phosphoserine: S505, S520, S530, and S532. Y537 carries the post-translational modification Phosphotyrosine. Residues S542, S558, and S562 each carry the phosphoserine modification.

It belongs to the dicarboxylate/amino acid:cation symporter (DAACS) (TC 2.A.23) family. SLC1A2 subfamily. Homotrimer. Interacts with AJUBA. In terms of processing, glycosylated. Palmitoylation at Cys-38 is not required for correct subcellular localization, but is important for glutamate uptake activity. As to expression, detected in brain. Detected in embryonic forebrain, especially in globus pallidus, perirhinal cortex, lateral hypothalamus, hippocampus, and on fimbria and axonal pathways connecting the neocortex, basal ganglia and thalamus (at protein level). Isoform GLT1 is expressed in the brain. Isoforms GLT-1A and GLT-1B are expressed in the liver.

Its subcellular location is the cell membrane. The catalysed reaction is K(+)(in) + L-glutamate(out) + 3 Na(+)(out) + H(+)(out) = K(+)(out) + L-glutamate(in) + 3 Na(+)(in) + H(+)(in). It catalyses the reaction K(+)(in) + L-aspartate(out) + 3 Na(+)(out) + H(+)(out) = K(+)(out) + L-aspartate(in) + 3 Na(+)(in) + H(+)(in). The enzyme catalyses D-aspartate(out) + K(+)(in) + 3 Na(+)(out) + H(+)(out) = D-aspartate(in) + K(+)(out) + 3 Na(+)(in) + H(+)(in). Functionally, sodium-dependent, high-affinity amino acid transporter that mediates the uptake of L-glutamate and also L-aspartate and D-aspartate. Functions as a symporter that transports one amino acid molecule together with two or three Na(+) ions and one proton, in parallel with the counter-transport of one K(+) ion. Mediates Cl(-) flux that is not coupled to amino acid transport; this avoids the accumulation of negative charges due to aspartate and Na(+) symport. Essential for the rapid removal of released glutamate from the synaptic cleft, and for terminating the postsynaptic action of glutamate. The sequence is that of Excitatory amino acid transporter 2 (Slc1a2) from Mus musculus (Mouse).